Consider the following 181-residue polypeptide: Der GTPase-activating protein YihI (181 aa).

The tract at residues 1–73 is disordered; the sequence is MSRIKKARKP…DPRIGSKKPI (73 aa). Residues 22 to 32 show a composition bias toward basic and acidic residues; sequence NRTDRDVESRE. Over residues 33-42 the composition is skewed to basic residues; sequence LKRKRKRKGL. Basic and acidic residues predominate over residues 55 to 67; the sequence is QARRNAQKKDPRI.

It belongs to the YihI family. Interacts with Der.

In terms of biological role, a GTPase-activating protein (GAP) that modifies Der/EngA GTPase function. May play a role in ribosome biogenesis. This is Der GTPase-activating protein YihI from Aliivibrio fischeri (strain MJ11) (Vibrio fischeri).